Consider the following 607-residue polypeptide: Autophagy-related protein 22-2 (607 aa).

The disordered stretch occupies residues 9–31; the sequence is FQSPSPDEGVQQRPPRYVGEDTT. The helical transmembrane segment at 44-64 threads the bilayer; it reads YGIAAEVFAVCGVGSFLPLTL. 2 N-linked (GlcNAc...) asparagine glycosylation sites follow: Asn88 and Asn91. 3 consecutive transmembrane segments (helical) span residues 111-131, 143-160, and 161-178; these read SFAM…LISF, TLLM…MLFV, and FIAP…VVGV. The disordered stretch occupies residues 203-263; it reads QEGKADDGTE…GMGTKAPLSS (61 aa). N-linked (GlcNAc...) asparagine glycosylation occurs at Asn235. 8 consecutive transmembrane segments (helical) span residues 277 to 297, 310 to 330, 381 to 401, 415 to 435, 450 to 470, 484 to 504, 521 to 543, and 552 to 572; these read GIGL…IMLL, TLPM…FTLV, VLIF…VSGT, PLIG…AFLW, IILC…AYIP, WEIF…ASYC, YALY…GGIV, and GFFF…MVNA. A disordered region spans residues 585-607; sequence TLGKSHGGPAEDAQEAEGLLARE.

It belongs to the ATG22 family.

The protein localises to the vacuole membrane. Functionally, vacuolar effluxer which mediate the efflux of amino acids resulting from autophagic degradation. The release of autophagic amino acids allows the maintenance of protein synthesis and viability during nitrogen starvation. The chain is Autophagy-related protein 22-2 (atg22-2) from Penicillium rubens (strain ATCC 28089 / DSM 1075 / NRRL 1951 / Wisconsin 54-1255) (Penicillium chrysogenum).